Consider the following 219-residue polypeptide: Small ribosomal subunit protein uS3c (219 aa).

Residues 43–118 (IKNYVQKNMK…KLNIAITRIA (76 aa)) enclose the KH type-2 domain.

The protein belongs to the universal ribosomal protein uS3 family. In terms of assembly, part of the 30S ribosomal subunit.

It localises to the plastid. Its subcellular location is the chloroplast. The sequence is that of Small ribosomal subunit protein uS3c (rps3) from Panax ginseng (Korean ginseng).